We begin with the raw amino-acid sequence, 2040 residues long: Apolipoprotein(a) (2040 aa).

The signal sequence occupies residues 1-19 (MEHKEVVLLLLLFLKSAAP). 10 consecutive Kringle domains span residues 27–105 (DCYH…LTQC), 141–219 (ECYH…LTQC), 255–333 (ECYH…LTQC), 369–447 (ECYH…LTQC), 483–561 (ECYH…LTQC), 597–675 (ECYH…LTQC), 711–789 (ECYH…LTQC), 825–903 (ECYH…LTQC), 939–1017 (ECYH…LTRC), and 1053–1131 (DCYY…LTQC). 30 disulfides stabilise this stretch: cysteine 28–cysteine 105, cysteine 49–cysteine 88, cysteine 77–cysteine 100, cysteine 142–cysteine 219, cysteine 163–cysteine 202, cysteine 191–cysteine 214, cysteine 256–cysteine 333, cysteine 277–cysteine 316, cysteine 305–cysteine 328, cysteine 370–cysteine 447, cysteine 391–cysteine 430, cysteine 419–cysteine 442, cysteine 484–cysteine 561, cysteine 505–cysteine 544, cysteine 533–cysteine 556, cysteine 598–cysteine 675, cysteine 619–cysteine 658, cysteine 647–cysteine 670, cysteine 712–cysteine 789, cysteine 733–cysteine 772, cysteine 761–cysteine 784, cysteine 826–cysteine 903, cysteine 847–cysteine 886, cysteine 875–cysteine 898, cysteine 940–cysteine 1017, cysteine 961–cysteine 1000, cysteine 989–cysteine 1012, cysteine 1054–cysteine 1131, cysteine 1075–cysteine 1114, and cysteine 1103–cysteine 1126. Residue asparagine 61 is glycosylated (N-linked (GlcNAc...) asparagine). Residue asparagine 101 is glycosylated (N-linked (GlcNAc...) asparagine). N-linked (GlcNAc...) asparagine glycosylation is present at asparagine 215. Asparagine 329 carries an N-linked (GlcNAc...) asparagine glycan. Asparagine 443 carries an N-linked (GlcNAc...) asparagine glycan. N-linked (GlcNAc...) asparagine glycosylation is present at asparagine 557. A glycan (N-linked (GlcNAc...) asparagine) is linked at asparagine 671. N-linked (GlcNAc...) asparagine glycosylation is present at asparagine 785. Asparagine 899 carries an N-linked (GlcNAc...) asparagine glycan. A glycan (N-linked (GlcNAc...) asparagine) is linked at asparagine 1013. Asparagine 1127 is a glycosylation site (N-linked (GlcNAc...) asparagine). The interval 1147-1166 (DPSTEASSEEAPTEQSPGVQ) is disordered. Kringle domains are found at residues 1167–1245 (DCYH…LTQC) and 1273–1351 (DCYH…LTQC). 6 cysteine pairs are disulfide-bonded: cysteine 1168–cysteine 1245, cysteine 1189–cysteine 1228, cysteine 1217–cysteine 1240, cysteine 1274–cysteine 1351, cysteine 1295–cysteine 1334, and cysteine 1323–cysteine 1346. N-linked (GlcNAc...) asparagine glycosylation occurs at asparagine 1241. Residues asparagine 1347 and asparagine 1381 are each glycosylated (N-linked (GlcNAc...) asparagine). The segment at 1365–1388 (VPVPSTELPSEEAPTENSTGVQDC) is disordered. Residues 1387–1465 (DCYRGDGQSY…RWEYCNLTRC (79 aa)) form the Kringle 13 domain. Cystine bridges form between cysteine 1388–cysteine 1465, cysteine 1409–cysteine 1448, and cysteine 1437–cysteine 1460. Asparagine 1461 carries an N-linked (GlcNAc...) asparagine glycan. The tract at residues 1476–1497 (PTVAPVPSTEAPSEQAPPEKSP) is disordered. 3 Kringle domains span residues 1501 to 1579 (DCYH…LTQC), 1615 to 1693 (QCYH…LTRC), and 1719 to 1799 (DCMF…IPLC). 10 cysteine pairs are disulfide-bonded: cysteine 1502-cysteine 1579, cysteine 1523-cysteine 1562, cysteine 1551-cysteine 1574, cysteine 1616-cysteine 1693, cysteine 1637-cysteine 1676, cysteine 1665-cysteine 1688, cysteine 1720-cysteine 1799, cysteine 1741-cysteine 1782, cysteine 1770-cysteine 1794, and cysteine 1846-cysteine 1862. Asparagine 1575 carries an N-linked (GlcNAc...) asparagine glycan. Residue asparagine 1689 is glycosylated (N-linked (GlcNAc...) asparagine). One can recognise a Peptidase S1 domain in the interval 1820 to 2038 (IVGGCVAHPH…FVTWIEGMMR (219 aa)). Residues histidine 1861 and aspartate 1904 each act as charge relay system in the active site. Intrachain disulfides connect cysteine 1938/cysteine 1996, cysteine 1968/cysteine 1975, and cysteine 1986/cysteine 2014. The active-site Charge relay system is serine 1990.

The protein belongs to the peptidase S1 family. Plasminogen subfamily. Disulfide-linked to apo-B100. Binds to fibronectin and decorin. In terms of processing, N- and O-glycosylated. The N-glycans are complex biantennary structures present in either a mono- or disialylated state. The O-glycans are mostly (80%) represented by the monosialylated core type I structure, NeuNAcalpha2-3Galbeta1-3GalNAc, with smaller amounts of disialylated and non-sialylated O-glycans also detected.

Apo(a) is the main constituent of lipoprotein(a) (Lp(a)). It has serine proteinase activity and is able of autoproteolysis. Inhibits tissue-type plasminogen activator 1. Lp(a) may be a ligand for megalin/Gp 330. The chain is Apolipoprotein(a) (LPA) from Homo sapiens (Human).